A 256-amino-acid polypeptide reads, in one-letter code: Ubiquinone/menaquinone biosynthesis C-methyltransferase UbiE (256 aa).

Positions 1–19 are enriched in polar residues; it reads MQNRSSSPDSSSAGNTHFG. Positions 1–24 are disordered; that stretch reads MQNRSSSPDSSSAGNTHFGFQSVP. Residues Thr-81, Asp-102, and 128–129 each bind S-adenosyl-L-methionine; that span reads DA.

The protein belongs to the class I-like SAM-binding methyltransferase superfamily. MenG/UbiE family.

It carries out the reaction a 2-demethylmenaquinol + S-adenosyl-L-methionine = a menaquinol + S-adenosyl-L-homocysteine + H(+). It catalyses the reaction a 2-methoxy-6-(all-trans-polyprenyl)benzene-1,4-diol + S-adenosyl-L-methionine = a 5-methoxy-2-methyl-3-(all-trans-polyprenyl)benzene-1,4-diol + S-adenosyl-L-homocysteine + H(+). The protein operates within quinol/quinone metabolism; menaquinone biosynthesis; menaquinol from 1,4-dihydroxy-2-naphthoate: step 2/2. It participates in cofactor biosynthesis; ubiquinone biosynthesis. Its function is as follows. Methyltransferase required for the conversion of demethylmenaquinol (DMKH2) to menaquinol (MKH2) and the conversion of 2-polyprenyl-6-methoxy-1,4-benzoquinol (DDMQH2) to 2-polyprenyl-3-methyl-6-methoxy-1,4-benzoquinol (DMQH2). The polypeptide is Ubiquinone/menaquinone biosynthesis C-methyltransferase UbiE (Bordetella avium (strain 197N)).